Consider the following 765-residue polypeptide: Protein transport protein sec23-2 (765 aa).

Cys-56, Cys-60, Cys-79, and Cys-82 together coordinate Zn(2+). Phosphoserine occurs at positions 565 and 566.

This sequence belongs to the SEC23/SEC24 family. SEC23 subfamily. In terms of assembly, the COPII coat is composed of at least 5 proteins: the sec23/24 complex, the sec13/31 complex, and the protein sar1.

The protein localises to the cytoplasm. Its subcellular location is the cytoplasmic vesicle. The protein resides in the COPII-coated vesicle membrane. It localises to the endoplasmic reticulum membrane. It is found in the golgi apparatus membrane. Its function is as follows. Component of the coat protein complex II (COPII) which promotes the formation of transport vesicles from the endoplasmic reticulum (ER). The coat has two main functions, the physical deformation of the endoplasmic reticulum membrane into vesicles and the selection of cargo molecules. In Schizosaccharomyces pombe (strain 972 / ATCC 24843) (Fission yeast), this protein is Protein transport protein sec23-2 (sec232).